We begin with the raw amino-acid sequence, 114 residues long: Gene 37 protein (114 aa).

The sequence is that of Gene 37 protein (37) from Mycobacterium (Mycobacteriophage L5).